We begin with the raw amino-acid sequence, 374 residues long: Inner membrane transport permease YhhJ (374 aa).

Over 1-22 the chain is Cytoplasmic; that stretch reads MRHLRNIFNLGIKELRSLLGDK. A helical transmembrane segment spans residues 23 to 43; that stretch reads AMLTLIVFSFTVSVYSSATVT. At 44–172 the chain is on the periplasmic side; it reads PGSLNLAPIA…TRMRFNPNLD (129 aa). The ABC transmembrane type-2 domain maps to 133-369; sequence NGYIQNIING…TIALLRFRKT (237 aa). A helical transmembrane segment spans residues 173-193; the sequence is PAWFGGVMAIINNITMLAIVL. The Cytoplasmic segment spans residues 194-229; that stretch reads TGSALIREREHGTVEHLLVMPITPFEIMMAKIWSMG. A helical membrane pass occupies residues 230–250; that stretch reads LVVLVVSGLSLVLMVKGVLGV. Residues 251–255 are Periplasmic-facing; it reads PIEGS. Residues 256 to 276 form a helical membrane-spanning segment; that stretch reads IPLFMLGVALSLFATTSIGIF. At 277–283 the chain is on the cytoplasmic side; it reads MGTIARS. The helical transmembrane segment at 284 to 304 threads the bilayer; that stretch reads MPQLGLLVILVLLPLQMLSGG. The Periplasmic portion of the chain corresponds to 305-342; the sequence is STPRESMPQMVQDIMLTMPTTHFVSLAQAILYRGAGFE. The helical transmembrane segment at 343–363 threads the bilayer; that stretch reads IVWPQFLTLMAIGGAFFTIAL. At 364–374 the chain is on the cytoplasmic side; the sequence is LRFRKTIGTMA.

The protein belongs to the ABC-2 integral membrane protein family.

It localises to the cell inner membrane. This Escherichia coli (strain K12) protein is Inner membrane transport permease YhhJ (yhhJ).